Consider the following 218-residue polypeptide: Glutathione S-transferase (218 aa).

The 87-residue stretch at 2-88 (PVTLGYWDIR…YIARKHDLCG (87 aa)) folds into the GST N-terminal domain. Residues 7–8 (YW), 46–50 (WLNEK), 59–60 (NL), and 72–73 (QS) each bind glutathione. The GST C-terminal domain maps to 90-208 (TEEERIQLDI…KSSRFSCKQI (119 aa)). Tyr116 provides a ligand contact to substrate.

It belongs to the GST superfamily. Mu family. Homodimer.

It is found in the cytoplasm. It carries out the reaction RX + glutathione = an S-substituted glutathione + a halide anion + H(+). Conjugation of reduced glutathione to a wide number of exogenous and endogenous hydrophobic electrophiles. The chain is Glutathione S-transferase from Mesocricetus auratus (Golden hamster).